The primary structure comprises 235 residues: Orotidine 5'-phosphate decarboxylase (235 aa).

Residues aspartate 12, lysine 34, 61–70 (DMKLLDIDNT), threonine 116, arginine 177, glutamine 186, and arginine 207 each bind substrate. Lysine 63 serves as the catalytic Proton donor.

The protein belongs to the OMP decarboxylase family. Type 1 subfamily. Homodimer.

The catalysed reaction is orotidine 5'-phosphate + H(+) = UMP + CO2. The protein operates within pyrimidine metabolism; UMP biosynthesis via de novo pathway; UMP from orotate: step 2/2. In terms of biological role, catalyzes the decarboxylation of orotidine 5'-monophosphate (OMP) to uridine 5'-monophosphate (UMP). This Agrobacterium fabrum (strain C58 / ATCC 33970) (Agrobacterium tumefaciens (strain C58)) protein is Orotidine 5'-phosphate decarboxylase.